A 93-amino-acid polypeptide reads, in one-letter code: Hematopoietic cell signal transducer (93 aa).

A signal peptide spans 1 to 18 (MIHLGHILFLLLLPVAAA). Residues 19–48 (QTTPGERSSLPAFYPGTSGSCSGCGSLSLP) are Extracellular-facing. The helical transmembrane segment at 49 to 69 (LLAGLVAADAVASLLIVGAVF) threads the bilayer. Topologically, residues 70–93 (LCARPRRSPAQEDGKVYINMPGRG) are cytoplasmic. A Phosphotyrosine modification is found at tyrosine 86. Positions 86 to 88 (YIN) are GRB2 binding site. Residues 86-89 (YINM) form a PIK3R1 binding site region.

The protein belongs to the DAP10 family. As to quaternary structure, interacts with CLEC5A. Forms an CLEC5A/TYROBP/HCST trimolecular complex depending almost solely on TYROBP. Homodimer; Disulfide-linked. Heterohexamer composed of four subunits of HCST/DAP10 and two subunits of KLRK1. Interacts (via transmembrane domain) with KLRK1 (via transmembrane domain); the interaction is required for KLRK1 NK cell surface and induces NK cell-mediated cytotoxicity. Interacts with PIK3R1 and GRB2. Interacts with CD300H. In terms of processing, phosphorylated; PIK3R1 and GRB2 associate specifically with tyrosine-phosphorylated HCST. Post-translationally, O-glycosylated. Predominantly expressed in hemopoietic cells such as NK cells, subset of T-cells and monocytes. Detected in leukocytes, spleen, and thymus.

It is found in the membrane. Functionally, transmembrane adapter protein which associates with KLRK1 to form an activation receptor KLRK1-HCST in lymphoid and myeloid cells; this receptor plays a major role in triggering cytotoxicity against target cells expressing cell surface ligands such as MHC class I chain-related MICA and MICB, and UL16-binding proteins (ULBPs); these ligands are up-regulated by stress conditions and pathological state such as viral infection and tumor transformation. Functions as a docking site for PI3-kinase PIK3R1 and GRB2. Interaction of ULBPs with KLRK1-HCST triggers calcium mobilization and activation of the PIK3R1, MAP2K/ERK, and JAK2/STAT5 signaling pathways. Both PIK3R1 and GRB2 are required for full KLRK1-HCST-mediated activation and ultimate killing of target cells. In NK cells, KLRK1-HCST signaling directly induces cytotoxicity and enhances cytokine production initiated via DAP12/TYROBP-associated receptors. In T-cells, it provides primarily costimulation for TCR-induced signals. KLRK1-HCST receptor plays a role in immune surveillance against tumors and is required for cytolysis of tumors cells; indeed, melanoma cells that do not express KLRK1 ligands escape from immune surveillance mediated by NK cells. The chain is Hematopoietic cell signal transducer (HCST) from Homo sapiens (Human).